The primary structure comprises 266 residues: Thymidylate synthase (266 aa).

A dUMP-binding site is contributed by Arg-24. His-54 provides a ligand contact to (6R)-5,10-methylene-5,6,7,8-tetrahydrofolate. Residue 129-130 participates in dUMP binding; it reads RR. The active-site Nucleophile is Cys-149. DUMP is bound by residues 169–172, Asn-180, and 210–212; these read RSAD and HIY. Asp-172 is a (6R)-5,10-methylene-5,6,7,8-tetrahydrofolate binding site. Residue Ala-265 coordinates (6R)-5,10-methylene-5,6,7,8-tetrahydrofolate.

This sequence belongs to the thymidylate synthase family. Bacterial-type ThyA subfamily. In terms of assembly, homodimer.

It localises to the cytoplasm. The catalysed reaction is dUMP + (6R)-5,10-methylene-5,6,7,8-tetrahydrofolate = 7,8-dihydrofolate + dTMP. It participates in pyrimidine metabolism; dTTP biosynthesis. In terms of biological role, catalyzes the reductive methylation of 2'-deoxyuridine-5'-monophosphate (dUMP) to 2'-deoxythymidine-5'-monophosphate (dTMP) while utilizing 5,10-methylenetetrahydrofolate (mTHF) as the methyl donor and reductant in the reaction, yielding dihydrofolate (DHF) as a by-product. This enzymatic reaction provides an intracellular de novo source of dTMP, an essential precursor for DNA biosynthesis. This chain is Thymidylate synthase, found in Mycobacterium avium (strain 104).